Consider the following 230-residue polypeptide: Flagellar L-ring protein (230 aa).

The signal sequence occupies residues 1–26 (MKQVRLLPSATVRAACAVAVAAFAAG). Cys-27 carries N-palmitoyl cysteine lipidation. The S-diacylglycerol cysteine moiety is linked to residue Cys-27.

This sequence belongs to the FlgH family. The basal body constitutes a major portion of the flagellar organelle and consists of four rings (L,P,S, and M) mounted on a central rod.

Its subcellular location is the cell outer membrane. It localises to the bacterial flagellum basal body. Functionally, assembles around the rod to form the L-ring and probably protects the motor/basal body from shearing forces during rotation. The chain is Flagellar L-ring protein from Burkholderia lata (strain ATCC 17760 / DSM 23089 / LMG 22485 / NCIMB 9086 / R18194 / 383).